Here is a 179-residue protein sequence, read N- to C-terminus: MSKDLEVAGRYANALFQVAQDKDLVDVFSEELTELKAALKANKDFVKLLENPTFTTEQKKNLASAVFEKINPTLRDFIYLLIDRSREDYLSVIADVYQKRVNDLRGVADADVYSVVPLSEQELTALSRVFATKMNKTKLNIQNHIDKSLLGGVKVVIGTRIYDDSLKTKLKDMERQIKA.

It belongs to the ATPase delta chain family. F-type ATPases have 2 components, F(1) - the catalytic core - and F(0) - the membrane proton channel. F(1) has five subunits: alpha(3), beta(3), gamma(1), delta(1), epsilon(1). F(0) has three main subunits: a(1), b(2) and c(10-14). The alpha and beta chains form an alternating ring which encloses part of the gamma chain. F(1) is attached to F(0) by a central stalk formed by the gamma and epsilon chains, while a peripheral stalk is formed by the delta and b chains.

Its subcellular location is the cell membrane. In terms of biological role, f(1)F(0) ATP synthase produces ATP from ADP in the presence of a proton or sodium gradient. F-type ATPases consist of two structural domains, F(1) containing the extramembraneous catalytic core and F(0) containing the membrane proton channel, linked together by a central stalk and a peripheral stalk. During catalysis, ATP synthesis in the catalytic domain of F(1) is coupled via a rotary mechanism of the central stalk subunits to proton translocation. This protein is part of the stalk that links CF(0) to CF(1). It either transmits conformational changes from CF(0) to CF(1) or is implicated in proton conduction. The sequence is that of ATP synthase subunit delta from Listeria monocytogenes serovar 1/2a (strain ATCC BAA-679 / EGD-e).